Here is a 414-residue protein sequence, read N- to C-terminus: Serine hydroxymethyltransferase (414 aa).

Residues Leu-118 and 122–124 (GHL) contribute to the (6S)-5,6,7,8-tetrahydrofolate site. Lys-227 is modified (N6-(pyridoxal phosphate)lysine). Residues Glu-240 and 350 to 352 (SPF) each bind (6S)-5,6,7,8-tetrahydrofolate.

Belongs to the SHMT family. Homodimer. Pyridoxal 5'-phosphate is required as a cofactor.

It is found in the cytoplasm. It carries out the reaction (6R)-5,10-methylene-5,6,7,8-tetrahydrofolate + glycine + H2O = (6S)-5,6,7,8-tetrahydrofolate + L-serine. The protein operates within one-carbon metabolism; tetrahydrofolate interconversion. Its pathway is amino-acid biosynthesis; glycine biosynthesis; glycine from L-serine: step 1/1. Functionally, catalyzes the reversible interconversion of serine and glycine with tetrahydrofolate (THF) serving as the one-carbon carrier. This reaction serves as the major source of one-carbon groups required for the biosynthesis of purines, thymidylate, methionine, and other important biomolecules. Also exhibits THF-independent aldolase activity toward beta-hydroxyamino acids, producing glycine and aldehydes, via a retro-aldol mechanism. This is Serine hydroxymethyltransferase from Bacillus thuringiensis (strain Al Hakam).